The primary structure comprises 316 residues: N-acetyl-gamma-glutamyl-phosphate reductase (316 aa).

Cysteine 136 is a catalytic residue.

This sequence belongs to the NAGSA dehydrogenase family. Type 1 subfamily.

It is found in the cytoplasm. It carries out the reaction N-acetyl-L-glutamate 5-semialdehyde + phosphate + NADP(+) = N-acetyl-L-glutamyl 5-phosphate + NADPH + H(+). It functions in the pathway amino-acid biosynthesis; L-arginine biosynthesis; N(2)-acetyl-L-ornithine from L-glutamate: step 3/4. Functionally, catalyzes the NADPH-dependent reduction of N-acetyl-5-glutamyl phosphate to yield N-acetyl-L-glutamate 5-semialdehyde. This is N-acetyl-gamma-glutamyl-phosphate reductase from Xanthomonas oryzae pv. oryzae (strain MAFF 311018).